The sequence spans 315 residues: tRNA-cytidine(32) 2-sulfurtransferase (315 aa).

A PP-loop motif motif is present at residues 54-59; that stretch reads SGGKDS. Positions 129, 132, and 220 each coordinate [4Fe-4S] cluster.

The protein belongs to the TtcA family. In terms of assembly, homodimer. The cofactor is Mg(2+). [4Fe-4S] cluster serves as cofactor.

The protein localises to the cytoplasm. The enzyme catalyses cytidine(32) in tRNA + S-sulfanyl-L-cysteinyl-[cysteine desulfurase] + AH2 + ATP = 2-thiocytidine(32) in tRNA + L-cysteinyl-[cysteine desulfurase] + A + AMP + diphosphate + H(+). The protein operates within tRNA modification. In terms of biological role, catalyzes the ATP-dependent 2-thiolation of cytidine in position 32 of tRNA, to form 2-thiocytidine (s(2)C32). The sulfur atoms are provided by the cysteine/cysteine desulfurase (IscS) system. This Bordetella avium (strain 197N) protein is tRNA-cytidine(32) 2-sulfurtransferase.